Here is a 413-residue protein sequence, read N- to C-terminus: Histidine--tRNA ligase (413 aa).

The protein belongs to the class-II aminoacyl-tRNA synthetase family. As to quaternary structure, homodimer.

The protein resides in the cytoplasm. The catalysed reaction is tRNA(His) + L-histidine + ATP = L-histidyl-tRNA(His) + AMP + diphosphate + H(+). This is Histidine--tRNA ligase from Fusobacterium nucleatum subsp. nucleatum (strain ATCC 25586 / DSM 15643 / BCRC 10681 / CIP 101130 / JCM 8532 / KCTC 2640 / LMG 13131 / VPI 4355).